The chain runs to 361 residues: Phosphoserine aminotransferase (361 aa).

Position 42 (Arg42) interacts with L-glutamate. Residues 76 to 77, Trp102, Thr153, Asp173, and Gln196 each bind pyridoxal 5'-phosphate; that span reads AR. Lys197 carries the N6-(pyridoxal phosphate)lysine modification. 238–239 serves as a coordination point for pyridoxal 5'-phosphate; the sequence is NT.

This sequence belongs to the class-V pyridoxal-phosphate-dependent aminotransferase family. SerC subfamily. As to quaternary structure, homodimer. Pyridoxal 5'-phosphate is required as a cofactor.

Its subcellular location is the cytoplasm. It catalyses the reaction O-phospho-L-serine + 2-oxoglutarate = 3-phosphooxypyruvate + L-glutamate. The enzyme catalyses 4-(phosphooxy)-L-threonine + 2-oxoglutarate = (R)-3-hydroxy-2-oxo-4-phosphooxybutanoate + L-glutamate. Its pathway is amino-acid biosynthesis; L-serine biosynthesis; L-serine from 3-phospho-D-glycerate: step 2/3. It functions in the pathway cofactor biosynthesis; pyridoxine 5'-phosphate biosynthesis; pyridoxine 5'-phosphate from D-erythrose 4-phosphate: step 3/5. Functionally, catalyzes the reversible conversion of 3-phosphohydroxypyruvate to phosphoserine and of 3-hydroxy-2-oxo-4-phosphonooxybutanoate to phosphohydroxythreonine. This is Phosphoserine aminotransferase from Buchnera aphidicola subsp. Acyrthosiphon pisum (strain Tuc7).